The sequence spans 896 residues: Chromatin assembly factor 1 subunit A-A (896 aa).

Disordered regions lie at residues 1–23, 185–377, and 552–610; these read MPGKEAAVNVMQSSTKSNTKKMV, TSTS…EEEK, and DSDE…DPEN. Over residues 10 to 21 the composition is skewed to polar residues; the sequence is VMQSSTKSNTKK. The span at 211-226 shows a compositional bias: low complexity; sequence ASVSSSSSPVSLSSPD. A compositionally biased stretch (polar residues) spans 227-236; sequence AQTGSQFRNR. Over residues 237–246 the composition is skewed to low complexity; sequence SSPSTSTTPT. The span at 255-284 shows a compositional bias: basic and acidic residues; the sequence is SADKNKTKDKDKQRQAEKEERERAKKEARS. The span at 285–302 shows a compositional bias: basic residues; sequence AKKKKRQGLLKNLQRKRG. Positions 308-377 are enriched in basic and acidic residues; sequence SGKEYKKEKK…EEKRLKEEEK (70 aa). Composition is skewed to acidic residues over residues 552–563, 572–586, and 595–607; these read DSDEEWEEEEPG, ENDDDPKEDDEDDDG, and SDDEGVSDEECTD. The interval 642-678 is necessary for homodimerization, competence for chromatin assembly; sequence CVWWDSKASEISLLQKFSACILESPAVDEELAQEISS. A disordered region spans residues 724–743; the sequence is SDAAGNESTSPNVTPQTPSN. The segment covering 729–743 has biased composition (polar residues); sequence NESTSPNVTPQTPSN.

Belongs to the CHAF1A family. As to quaternary structure, homodimer.

It localises to the nucleus. In terms of biological role, involved in chromatin assembly in DNA replication and DNA repair. The sequence is that of Chromatin assembly factor 1 subunit A-A (chaf1a-a) from Xenopus laevis (African clawed frog).